The sequence spans 103 residues: Large ribosomal subunit protein bL21 (103 aa).

This sequence belongs to the bacterial ribosomal protein bL21 family. In terms of assembly, part of the 50S ribosomal subunit. Contacts protein L20.

This protein binds to 23S rRNA in the presence of protein L20. This Haemophilus influenzae (strain 86-028NP) protein is Large ribosomal subunit protein bL21.